The chain runs to 417 residues: MSEKSREYYTIARDLMPGGVSSPVRAIQPYPFYTVRGSGSRIYTVDGTELIDCCGAYGPLILGHACKPVGDAISSALDDGWLYGTPTPAEIDLAQILIADHPSIEMVRFVTTGSEATMAAIRLARGYTGKSDIIKTEGGFHGAHDGVLVQAGSGCTTLGQPDSAGVLSDIVRHTRQVPYNDTESLISLVDKSGDEIAAMILEPVMGNIGPVLPKPGYLQEVRKITAEHDILLIFDEVITGYRVGIGGAQKLFGVTPDITTLGKIIGGGLPLSAFGGKRKIMELIAPAGPVYQAGTFSGNPLSLAAGVAALREIHARKGMYTLLDTATTVIGEACQGKGGSFVKLGSMFKFFFRSSVPENYAQAKESDTTKFRAFWEKMLEKGIFLPPSQFETNFLSAAHSDSDVEYLSSAYASCLSA.

Lys-263 carries the N6-(pyridoxal phosphate)lysine modification.

This sequence belongs to the class-III pyridoxal-phosphate-dependent aminotransferase family. HemL subfamily. Pyridoxal 5'-phosphate serves as cofactor.

The protein localises to the cytoplasm. It catalyses the reaction (S)-4-amino-5-oxopentanoate = 5-aminolevulinate. It functions in the pathway porphyrin-containing compound metabolism; protoporphyrin-IX biosynthesis; 5-aminolevulinate from L-glutamyl-tRNA(Glu): step 2/2. The protein is Glutamate-1-semialdehyde 2,1-aminomutase of Methanospirillum hungatei JF-1 (strain ATCC 27890 / DSM 864 / NBRC 100397 / JF-1).